The chain runs to 915 residues: Pentatricopeptide repeat-containing protein At5g65560 (915 aa).

PPR repeat units follow at residues 182-216 (IIGC…KVCP), 217-251 (NIYT…GLDP), 252-286 (DFFT…GCRR), 287-321 (NEVA…ECFP), 322-356 (TVRT…GIKP), 357-391 (NIHT…GLMP), 392-426 (NVIT…KLSP), 427-460 (NTRT…KVLP), 461-495 (DVVT…GLVP), 496-530 (DQWT…GVNP), 531-565 (NVVM…NCLP), 566-600 (NSLT…GLQP), 601-635 (TVST…GTKP), 636-670 (DAHT…GVSP), 671-705 (DLFT…GCEP), 724-758 (KQKG…SVTP), 759-794 (NAKS…GISP), 795-829 (SELV…GHLP), 830-864 (QLES…GYYE), and 865-899 (DELA…GCKF).

It belongs to the PPR family. P subfamily.

This Arabidopsis thaliana (Mouse-ear cress) protein is Pentatricopeptide repeat-containing protein At5g65560.